A 38-amino-acid chain; its full sequence is Allatostatin-C (38 aa).

Residues 1 to 19 (MRRALDGPGSSSLDTRQAD) constitute a propeptide that is removed on maturation. Glutamine 22 bears the Pyrrolidone carboxylic acid; partial mark.

It belongs to the allatostatin family. In its non-pyroglutamate form, expressed in antennal lobe (AL), corpora cardiaca (CC), corpora allata (CA) and gnathal ganglion (GNG) with expression in AL detected in most animals and expression in CC, CA and GNG detected in few animals (at protein level). In its pyroglutamate form, expressed in antennal lobe (AL), corpora cardiaca (CC) and corpora allata (CA) with expression detected in few animals (at protein level). Not expressed in GNG (protein level).

It localises to the secreted. In terms of biological role, strongly inhibits juvenile hormone biosynthesis. This chain is Allatostatin-C, found in Agrotis ipsilon (Black cutworm moth).